The following is a 277-amino-acid chain: Anamorsin homolog (277 aa).

The segment at 1-134 (MALQGNVAIL…PFYPEFSDAV (134 aa)) is N-terminal SAM-like domain. Residues 135 to 191 (SFTSKKQSFESAAIPLAVKSTTTQPIKKWTVLADDFGDDQDDDIIDEDTLLDDTDEV) form a linker region. Positions 199, 210, 213, and 215 each coordinate [2Fe-2S] cluster. The interval 199-215 (CGDAVGGKKRACKNCTC) is fe-S binding site A. Residues cysteine 238, cysteine 241, cysteine 249, and cysteine 252 each coordinate [4Fe-4S] cluster. Short sequence motifs (cx2C motif) lie at residues 238-241 (CGNC) and 249-252 (CGSC). Positions 238–252 (CGNCFKGDAFRCGSC) are fe-S binding site B.

The protein belongs to the anamorsin family. In terms of assembly, monomer. The cofactor is [2Fe-2S] cluster. It depends on [4Fe-4S] cluster as a cofactor.

It is found in the cytoplasm. It localises to the mitochondrion intermembrane space. Component of the cytosolic iron-sulfur (Fe-S) protein assembly (CIA) machinery. Required for the maturation of extramitochondrial Fe-S proteins. Part of an electron transfer chain functioning in an early step of cytosolic Fe-S biogenesis, facilitating the de novo assembly of a [4Fe-4S] cluster on the cytosolic Fe-S scaffold complex. Electrons are transferred from NADPH via a FAD- and FMN-containing diflavin oxidoreductase. Together with the diflavin oxidoreductase, also required for the assembly of the diferric tyrosyl radical cofactor of ribonucleotide reductase (RNR), probably by providing electrons for reduction during radical cofactor maturation in the catalytic small subunit. The chain is Anamorsin homolog from Phytophthora infestans (strain T30-4) (Potato late blight agent).